Reading from the N-terminus, the 557-residue chain is Pre-mRNA-processing protein 45 (557 aa).

Disordered regions lie at residues 1 to 32, 208 to 243, and 316 to 444; these read MALL…TSHA, EQDP…KVSA, and MAEK…MSSD. The span at 16–25 shows a compositional bias: acidic residues; the sequence is DFDDEEEDYV. Over residues 224–235 the composition is skewed to pro residues; sequence RGPPSPPPPVLH. Phosphoserine is present on residues Ser228 and Ser236. Over residues 316–327 the composition is skewed to basic and acidic residues; it reads MAEKEKQEKEQR. Ser376 carries the post-translational modification Phosphoserine. The segment covering 386–430 has biased composition (basic and acidic residues); the sequence is EAFRRRQELRRERRRQAEKDLRLSRMGAEKRAKLAEKDRPRDVAE.

It belongs to the SNW family. As to quaternary structure, homodimer. Interacts with cyp1 and the small 23 kDa subunit of the splicing factor U2AF (u2af23). Belongs to the 40S cdc5-associated complex (or cwf complex), a spliceosome sub-complex reminiscent of a late-stage spliceosome composed of the U2, U5 and U6 snRNAs and at least brr2, cdc5, cwf2/prp3, cwf3/syf1, cwf4/syf3, cwf5/ecm2, spp42/cwf6, cwf7/spf27, cwf8, cwf9, cwf10, cwf11, cwf12, prp45/cwf13, cwf14, cwf15, cwf16, cwf17, cwf18, cwf19, cwf20, cwf21, cwf22, cwf23, cwf24, cwf25, cwf26, cyp7/cwf27, cwf28, cwf29/ist3, lea1, msl1, prp5/cwf1, prp10, prp12/sap130, prp17, prp22, sap61, sap62, sap114, sap145, slu7, smb1, smd1, smd3, smf1, smg1 and syf2.

It is found in the nucleus. Its function is as follows. Involved in pre-mRNA splicing. The protein is Pre-mRNA-processing protein 45 (prp45) of Schizosaccharomyces pombe (strain 972 / ATCC 24843) (Fission yeast).